Consider the following 288-residue polypeptide: Acetyl-coenzyme A carboxylase carboxyl transferase subunit beta (288 aa).

The CoA carboxyltransferase N-terminal domain maps to 34-288 (LFAKCPACKH…HLVAFHGGGQ (255 aa)). 4 residues coordinate Zn(2+): Cys38, Cys41, Cys56, and Cys59. A C4-type zinc finger spans residues 38 to 59 (CPACKHMIYKKDLGLAKICPTC).

It belongs to the AccD/PCCB family. In terms of assembly, acetyl-CoA carboxylase is a heterohexamer composed of biotin carboxyl carrier protein (AccB), biotin carboxylase (AccC) and two subunits each of ACCase subunit alpha (AccA) and ACCase subunit beta (AccD). The cofactor is Zn(2+).

The protein localises to the cytoplasm. The enzyme catalyses N(6)-carboxybiotinyl-L-lysyl-[protein] + acetyl-CoA = N(6)-biotinyl-L-lysyl-[protein] + malonyl-CoA. It functions in the pathway lipid metabolism; malonyl-CoA biosynthesis; malonyl-CoA from acetyl-CoA: step 1/1. Functionally, component of the acetyl coenzyme A carboxylase (ACC) complex. Biotin carboxylase (BC) catalyzes the carboxylation of biotin on its carrier protein (BCCP) and then the CO(2) group is transferred by the transcarboxylase to acetyl-CoA to form malonyl-CoA. The polypeptide is Acetyl-coenzyme A carboxylase carboxyl transferase subunit beta (Streptococcus pyogenes serotype M6 (strain ATCC BAA-946 / MGAS10394)).